We begin with the raw amino-acid sequence, 85 residues long: Small ribosomal subunit protein bS20 (85 aa).

Disordered stretches follow at residues 1–25 (MANI…ASIK) and 62–85 (ARKG…QVNA).

It belongs to the bacterial ribosomal protein bS20 family.

Binds directly to 16S ribosomal RNA. The polypeptide is Small ribosomal subunit protein bS20 (Bacillus cereus (strain G9842)).